Here is a 249-residue protein sequence, read N- to C-terminus: MEGFSGLFAASEPSSIPSAPGPPSVVPTCTGAFVSGKTQTSTPTVPGPPLPIPPPLSSSSSGEDSSRRPAAGPFYILRELPGLSDLTGSVNLILHYNLEHSFSKFCGKKMKEKLSNFLPDLPGMIDTPGAQDNSSLRSLIEKPPICGNSFTPLTGALLTGFRLHTGPLPEQCRLMHIQPPKKKNKKHKQSRTQEPAPPETPSDSDHRKKKKKQREDDPERRRKKKDKKKKKSRHSPEHPGAGSSQSGLR.

Disordered stretches follow at residues 1 to 68 and 178 to 249; these read MEGF…SSRR and QPPK…SGLR. The segment covering 9 to 18 has biased composition (low complexity); it reads AASEPSSIPS. Residues 45–56 show a composition bias toward pro residues; sequence VPGPPLPIPPPL. Composition is skewed to basic residues over residues 179–190 and 221–233; these read PPKKKNKKHKQS and RRKK…KKSR.

Belongs to the Mediator complex subunit 19 family. In terms of assembly, component of the Mediator complex.

It localises to the nucleus. Its function is as follows. Component of the Mediator complex, a coactivator involved in the regulated transcription of nearly all RNA polymerase II-dependent genes. Mediator functions as a bridge to convey information from gene-specific regulatory proteins to the basal RNA polymerase II transcription machinery. Mediator is recruited to promoters by direct interactions with regulatory proteins and serves as a scaffold for the assembly of a functional preinitiation complex with RNA polymerase II and the general transcription factors. The sequence is that of Mediator of RNA polymerase II transcription subunit 19 (med19) from Xenopus tropicalis (Western clawed frog).